A 95-amino-acid polypeptide reads, in one-letter code: Small ribosomal subunit protein bS20 (95 aa).

It belongs to the bacterial ribosomal protein bS20 family.

In terms of biological role, binds directly to 16S ribosomal RNA. The polypeptide is Small ribosomal subunit protein bS20 (Ehrlichia chaffeensis (strain ATCC CRL-10679 / Arkansas)).